We begin with the raw amino-acid sequence, 2285 residues long: MKGHQFKSWIFELREILREIKNSHYFLDSWTQFNSVGSFIHIFFHQERFIKLLDSRIWSILFSRNSQGSTSNRYFTIKGVVLFVVVVLIYRINNRKMVERKNLYLTGLLPIPMNSIGPRNDTLEESFGSSNINRLIVSLLYLPKGKKISESRFLDPKESTWVLPITKKCIMSESNWGSRWWRNWIGKKRDSSCKISNETVAGIEISFKEKDIKYLEFLFVYYMDDPIRKDHDWELFDRLSPRKGRNIINLNSGQLFEILVKDWICYLMFAFREKIPIEVEGFFKQQGAGSTIQSNDIEHVSHLFSRKKWAISLQNCAQFHMWQFRQDLFVSWGNNPHESDFLRNISRENWIWLDNVWLVNKDRFFSKARNISSNIQYDSTRSSFVQGRDSSQLKGSSDQSRDHFDSISNEDSEYHTLINQREIQQLKERSILWDPSFLQTERTEIESDRFPKCLSGYSSMSRLFTEGAKEMNNHLLPEEIEEFLGNPTRSIRSFFSDRWSELHLGSNPTERSTRDQKLLKKEQDVSFVPSRRSENKEIVNIFKTITYLQNTVSIHPISSDPGCDMVLKDELDMDSSNKISFLNKNPFFDLFHLFHDRNGGGYTLHHDFESEERFQEMADLFTLSITEPDLVYHKGFAFFIDSYGLDQKQFLNEVFNSRDESKKKSLLVLPPIFYEENESFYRRIRKKWVRISCGNDLEDPKQKRVVFASNNIMEAVNQYGLIRNLIQIQYSTYGYIRNVLNQFFLMNRSDRNFEYGIQKDQIGNDTLNHRTLMKYTINQHLSNLKQSQKKWFDPLIFLSRTERSMNWDPNSYRYKWSNGSNNFQEHLEHFISEQKSRFLFQVVFDRLRINQYSIDWSEVIDKKDLSKSLPFFLSKLLLFLSKFLLFLSNSLPFFFVSFGNIPIHRSEIHIYELKGPNDQLCNQLLEPIGLQIVHLKKWKPFLLDDHDTSQKSKFLINGGTISPFLFNKIPKWMIDSFHTRNNRRKSFDNTDSSFSMISHDQDNWLNPVKPFHRSSLISSFYKANRLRFLNNLHHFCFYCNKRFPFYVEKARIKNYDFTYGQFLNILFIRNKIFSLCGGKKKHAFLERDTISPIESQVSNIFIPNDFPQSGDESLYKSFHFPIRPDPFVRRAIYSIADVSGTPLTEGQIFNFERTYCQPLSDINLSDSEGKNLHQYLNFNSNMGLIHTPCSEKYLPSEKRKKRSLCLKKCVEKGQMYRTFQRDSAFSTLSKWNLFQTYMPWFLTSTGYKYLNLIFLDTFSDHLLPILSSSQKIVSIFHDIMHGSDISWRILQKNLWKTQWNLISEISSKCLHNLLLSEEMIHRNNEPPLISTRLRSPNVREFLYSILFLLLVAGYLVRTHLLFVSRAYSELQTEFEKVKSLMIPSYMIELRKLLDRYPTSELNSFWLKNLFLVALEQLGDLLEEIRGSASGGNMLWGGGPAYGVKSIRSKKKFFNINLIDLISIIPNPINRITFSRNTRHLSHTSKEIYSLIRKRKNVNGDWIDDKIESLVANSDSIDDKEREFLVQFSTLTTEKRIDQILLSLTHSDHLSKNDSGYQMIEEPGAIYLRYLVDIHKKYLMNYEFNTPCLAERRIFLAHYQTITYSQTSCGANSFHFPSHGKPFSLRLALSPSRGILVIGSIGTGRSYLVKYLATNSYVPFITVFLNKFLDNKPKGFLIDDRDDIDDSDDIDVSDDIDRDLDTELELLTRMNVLTMDMMPEIDRFYITLQFELAKAMSPCIIWIPNIHDLDVNESNYLSLGLLVNYLSRDCERCSTRNILVIASTHIPQKVDPALIAPNKLNTCIKIRRLLIPQQRKHVFTLSYSRGFHLEKKMFHTKRFGSVTMGSNVRDLVALTNEALSISITQKKSIIDTNIIRSALHRQTWDLRSQVRSVQDHGILFYQIGRAVAQNVFLSNCPIDPISIYMKKKSCNEGDSYLYKWYFELGTSMKKLTILLYLLSCSAGSIAQDLWSLPGPDEKNGITYYGLVENDSDLVHGLLEVEGALVGSSRTEKDCSQFDNDRVTLLLRPEPRSPLDMMQNGSCSILDQRFLYEKYESEFEEGEVEGILDPQQIEEDLFNHIVWAPRIWSPWGFLFDCIERPNSLGFPYWARSFRGKRIIYDEEDELQENDSEFLQSGTMQYQIRDRSSKEQGVFRISQFIWDPADPLFFLFKDQPLVSVFSHREFFADEEMSKGLLTSQTDPPTSIYKRWFIKNTQEKHFELLIHRQRWLRTKSSLSNGFFRSNTLSESYQYLSNLFLSNGRLLDQMTKALLRKRWLFPDEMKIGFM.

1638–1645 is a binding site for ATP; that stretch reads GSIGTGRS.

Belongs to the Ycf2 family.

The protein localises to the plastid. Its subcellular location is the chloroplast stroma. Its function is as follows. Probable ATPase of unknown function. Its presence in a non-photosynthetic plant (Epifagus virginiana) and experiments in tobacco indicate that it has an essential function which is probably not related to photosynthesis. The chain is Protein Ycf2 from Populus trichocarpa (Western balsam poplar).